A 213-amino-acid chain; its full sequence is Imidazole glycerol phosphate synthase subunit HisH 2 (213 aa).

Residues 4–211 (RLGLIDYGMG…LNWLETGAKP (208 aa)) form the Glutamine amidotransferase type-1 domain. Catalysis depends on cysteine 82, which acts as the Nucleophile. Catalysis depends on residues histidine 186 and glutamate 188.

In terms of assembly, heterodimer of HisH and HisF.

The protein resides in the cytoplasm. The enzyme catalyses 5-[(5-phospho-1-deoxy-D-ribulos-1-ylimino)methylamino]-1-(5-phospho-beta-D-ribosyl)imidazole-4-carboxamide + L-glutamine = D-erythro-1-(imidazol-4-yl)glycerol 3-phosphate + 5-amino-1-(5-phospho-beta-D-ribosyl)imidazole-4-carboxamide + L-glutamate + H(+). The catalysed reaction is L-glutamine + H2O = L-glutamate + NH4(+). It functions in the pathway amino-acid biosynthesis; L-histidine biosynthesis; L-histidine from 5-phospho-alpha-D-ribose 1-diphosphate: step 5/9. IGPS catalyzes the conversion of PRFAR and glutamine to IGP, AICAR and glutamate. The HisH subunit provides the glutamine amidotransferase activity that produces the ammonia necessary to HisF for the synthesis of IGP and AICAR. The protein is Imidazole glycerol phosphate synthase subunit HisH 2 (hisH2) of Prochlorococcus marinus (strain MIT 9313).